The following is a 397-amino-acid chain: Teichoic acid D-alanine hydrolase (397 aa).

An N-terminal signal peptide occupies residues 1 to 23 (MKFNKVKLVIHACVLLFIIISIA).

It is found in the cell membrane. It catalyses the reaction [(4-D-Ala)-(2-GlcNAc)-Rib-ol-P]n-[Gro-P]m-beta-D-ManNAc-(1-&gt;4)-alpha-D-GlcNAc-P-peptidoglycan + n H2O = [(2-GlcNAc)-Rib-ol-P]n-[Gro-P]m-beta-D-ManNAc-(1-&gt;4)-alpha-D-GlcNAc-P-peptidoglycan + n D-alanine.. Its function is as follows. Catalyzes the liberation of D-alanyl moieties present on wall teichoic acid (WTA) and lipoteichoic acid (LTA). Affects the methicillin resistance level and autolysis in the presence of Triton X-100 as well as the cell wall structure. The polypeptide is Teichoic acid D-alanine hydrolase (fmtA) (Staphylococcus aureus (strain Mu50 / ATCC 700699)).